The primary structure comprises 518 residues: Arp2/3 complex-activating protein rickA (518 aa).

The tract at residues S310–R518 is disordered. Composition is skewed to pro residues over residues T344 to P354 and V382 to V401. Positions Q418–K430 are enriched in polar residues. The region spanning D424 to I441 is the WH2 domain. Residues K439–S461 show a composition bias toward basic and acidic residues. The segment covering G488–S498 has biased composition (polar residues).

As to quaternary structure, homodimer.

The protein resides in the cell surface. Functionally, recruits and activates the Arp2/3 complex, which in turn leads to actin polymerization, promoting Rickettsia motility during infection. This is Arp2/3 complex-activating protein rickA (rickA) from Rickettsia bellii (strain RML369-C).